Reading from the N-terminus, the 102-residue chain is Large ribosomal subunit protein uL24 (102 aa).

Belongs to the universal ribosomal protein uL24 family. In terms of assembly, part of the 50S ribosomal subunit.

Functionally, one of two assembly initiator proteins, it binds directly to the 5'-end of the 23S rRNA, where it nucleates assembly of the 50S subunit. One of the proteins that surrounds the polypeptide exit tunnel on the outside of the subunit. The protein is Large ribosomal subunit protein uL24 of Macrococcus caseolyticus (strain JCSC5402) (Macrococcoides caseolyticum).